The chain runs to 769 residues: Bifunctional glycosyltransferase pgtA (769 aa).

Residues 25-210 (YQGINNLIIS…SVIFKRSIFT (186 aa)) are N-acetylgalactosamine 3-beta-galactosyltransferase. Positions 410 to 441 (NNINNNNNNNNNNNNNNNNNNNNNNNNNNNNN) are enriched in low complexity. Residues 410–442 (NNINNNNNNNNNNNNNNNNNNNNNNNNNNNNNS) form a disordered region. The tract at residues 442–769 (SILNFISGIN…SVHIGELFIS (328 aa)) is alpha-1,2-fucosyltransferase.

Belongs to the glycosyltransferase 2 family.

The enzyme catalyses an N-acetyl-beta-D-glucosaminyl derivative + UDP-alpha-D-galactose = a beta-D-galactosyl-(1-&gt;3)-N-acetyl-beta-D-glucosaminyl derivative + UDP + H(+). The catalysed reaction is a beta-D-galactosyl-(1-&gt;3)-N-acetyl-beta-D-glucosaminyl derivative + GDP-beta-L-fucose = an alpha-L-Fuc-(1-&gt;2)-beta-D-Gal-(1-&gt;3)-beta-D-GlcNAc derivative + GDP + H(+). In terms of biological role, bifunctional protein composed of 2 glycosyltransferase domains involved in glycosylating skp1. The N-terminal part catalyzes the transfer of a galactose residue to GlcNAc-skp1 in a beta 1-3 linkage. The C-terminal part catalyzes the transfer of a fucose residue to Gal-GlcNAc-skp1 in an alpha 1-2 linkage. In Dictyostelium discoideum (Social amoeba), this protein is Bifunctional glycosyltransferase pgtA (pgtA).